A 173-amino-acid polypeptide reads, in one-letter code: Putative metal-dependent hydrolase OB0413 (173 aa).

3 residues coordinate Zn(2+): H64, H155, and H159.

The protein belongs to the metal hydrolase YfiT family. Homodimer. Requires Zn(2+) as cofactor.

The protein resides in the cytoplasm. Functionally, possible metal-dependent hydrolase. This is Putative metal-dependent hydrolase OB0413 from Oceanobacillus iheyensis (strain DSM 14371 / CIP 107618 / JCM 11309 / KCTC 3954 / HTE831).